The following is a 627-amino-acid chain: Neuronal acetylcholine receptor subunit alpha-4 (627 aa).

The N-terminal stretch at 1–28 (MELGGPGAPRLLPPLLLLLGTGLLRASS) is a signal peptide. Residues 29–242 (HVETRAHAEE…ITYAFVIRRL (214 aa)) lie on the Extracellular side of the membrane. N57 carries an N-linked (GlcNAc...) asparagine glycan. Residues V76 and E78 each contribute to the Ca(2+) site. Residues N107 and N174 are each glycosylated (N-linked (GlcNAc...) asparagine). 2 cysteine pairs are disulfide-bonded: C161–C175 and C225–C226. The helical transmembrane segment at 243–267 (PLFYTINLIIPCLLISCLTVLVFYL) threads the bilayer. C271 carries S-palmitoyl cysteine lipidation. Transmembrane regions (helical) follow at residues 275 to 293 (ITLCISVLLSLTVFLLLIT) and 309 to 330 (YLLFTMIFVTLSIVITVFVLNV). Topologically, residues 331–600 (HHRSPRTHTM…WKYVAMVIDR (270 aa)) are cytoplasmic. Disordered stretches follow at residues 382 to 479 (PRFW…EAVE) and 497 to 559 (DATS…RHLP). Residues S424, S538, and S541 each carry the phosphoserine modification. A helical membrane pass occupies residues 601-619 (IFLWMFIIVCLLGTVGLFL).

The protein belongs to the ligand-gated ion channel (TC 1.A.9) family. Acetylcholine receptor (TC 1.A.9.1) subfamily. Alpha-4/CHRNA4 sub-subfamily. As to quaternary structure, neuronal AChR is composed of two different types of subunits: alpha and beta. CHRNA4 forms heteropentameric neuronal acetylcholine receptors with CHRNB2 and CHRNB4, as well as CHRNA5 and CHRNB3 as accesory subunits. Found in two major stoichiometric forms, LS (low agonist sensitivity): (CHRNA4)3:(CHRNB2)2 and HS (high agonist sensitivity): (CHRNA4)2:(CHRNB2)3, the two stoichiometric forms differ in their unitary conductance, calcium permeability, ACh sensitivity and potentiation by divalent cation. Cells produce predominantly an (CHRNA4)3:(CHRNB2)2 nAChR. The (CHRNA4)2:(CHRNB2)3 expression is selectively up-regulated by nicotine and has lower single channel conductance and calcium permeability. In the striatum, also forms CHRNA4:CHRNA6:CHRNB2 complexes. Also found in the stoichiometric form: (CHRNA4:CHRNB2)2:CHRNB3. Interacts with RIC3; which is required for proper folding and assembly. Interacts with LYPD6.

It localises to the synaptic cell membrane. It is found in the cell membrane. The catalysed reaction is Ca(2+)(in) = Ca(2+)(out). It carries out the reaction K(+)(in) = K(+)(out). The enzyme catalyses Na(+)(in) = Na(+)(out). Its activity is regulated as follows. Activated by a myriad of ligands such as acetylcholine, cytisine, nicotine, choline and epibatidine. Channel potentiation by calcium is stoichiometry-selective, CHRNA4:CHRNB2 nACh receptor is achieved by calcium association with topographically distinct sites framed by anionic residues within the CHRNA4 subunit and between the CHRNA4 and CHRNB2 subunits. nAChR activity is inhibited by the antagonist alpha-conotoxins BuIA, PnIA, GID and MII, small disulfide-constrained peptides from cone snails. Its function is as follows. Component of neuronal acetylcholine receptors (nAChRs) that function as pentameric, ligand-gated cation channels with high calcium permeability among other activities. nAChRs are excitatory neurotrasnmitter receptors formed by a collection of nAChR subunits known to mediate synaptic transmission in the nervous system and the neuromuscular junction. Each nAchR subunit confers differential attributes to channel properties, including activation, deactivation and desensitization kinetics, pH sensitivity, cation permeability, and binding to allosteric modulators. CHRNA4 forms heteropentameric neuronal acetylcholine receptors with CHRNB2 and CHRNB4, as well as CHRNA5 and CHRNB3 as accesory subunits. Is the most abundant nAChR subtype expressed in the central nervous system. Found in two major stoichiometric forms,(CHRNA4)3:(CHRNB2)2 and (CHRNA4)2:(CHRNB2)3, the two stoichiometric forms differ in their unitary conductance, calcium permeability, ACh sensitivity and potentiation by divalent cation. Involved in the modulation of calcium-dependent signaling pathways, influences the release of neurotransmitters, including dopamine, glutamate and GABA. The chain is Neuronal acetylcholine receptor subunit alpha-4 (CHRNA4) from Pan troglodytes (Chimpanzee).